A 350-amino-acid polypeptide reads, in one-letter code: Ribosomal RNA small subunit methyltransferase C (350 aa).

The protein belongs to the methyltransferase superfamily. RsmC family. Monomer.

The protein localises to the cytoplasm. It carries out the reaction guanosine(1207) in 16S rRNA + S-adenosyl-L-methionine = N(2)-methylguanosine(1207) in 16S rRNA + S-adenosyl-L-homocysteine + H(+). Specifically methylates the guanine in position 1207 of 16S rRNA in the 30S particle. This Sodalis glossinidius (strain morsitans) protein is Ribosomal RNA small subunit methyltransferase C.